We begin with the raw amino-acid sequence, 812 residues long: 1,4-alpha-glucan branching enzyme GlgB (812 aa).

Residues 1-11 (MNNGDVNNGTA) are compositionally biased toward polar residues. The segment at 1–83 (MNNGDVNNGT…SALPADPPAV (83 aa)) is disordered. The segment covering 49-64 (SSASAQPGQTADDPAV) has biased composition (low complexity). Residues 65–83 (PSAPPSAPPSALPADPPAV) show a composition bias toward pro residues. Residue Asp490 is the Nucleophile of the active site. Residue Glu543 is the Proton donor of the active site.

Belongs to the glycosyl hydrolase 13 family. GlgB subfamily. Monomer.

It catalyses the reaction Transfers a segment of a (1-&gt;4)-alpha-D-glucan chain to a primary hydroxy group in a similar glucan chain.. The protein operates within glycan biosynthesis; glycogen biosynthesis. In terms of biological role, catalyzes the formation of the alpha-1,6-glucosidic linkages in glycogen by scission of a 1,4-alpha-linked oligosaccharide from growing alpha-1,4-glucan chains and the subsequent attachment of the oligosaccharide to the alpha-1,6 position. The chain is 1,4-alpha-glucan branching enzyme GlgB from Frankia casuarinae (strain DSM 45818 / CECT 9043 / HFP020203 / CcI3).